Consider the following 328-residue polypeptide: DNA polymerase III subunit delta' (328 aa).

DNA polymerase III contains a core (composed of alpha, epsilon and theta chains) that associates with a tau subunit. This core dimerizes to form the POLIII' complex. PolIII' associates with the gamma complex (composed of gamma, delta, delta', psi and chi chains) and with the beta chain to form the complete DNA polymerase III complex.

The enzyme catalyses DNA(n) + a 2'-deoxyribonucleoside 5'-triphosphate = DNA(n+1) + diphosphate. In terms of biological role, DNA polymerase III is a complex, multichain enzyme responsible for most of the replicative synthesis in bacteria. This DNA polymerase also exhibits 3' to 5' exonuclease activity. This is DNA polymerase III subunit delta' (holB) from Buchnera aphidicola subsp. Schizaphis graminum (strain Sg).